A 564-amino-acid chain; its full sequence is MKVGQPVLQCQTNSEAFGMMQERRSGNYKPNIWKYDFLQSLSSKYDEEKYKTQAERLKEDAKHLFIEAVDLQGKLELVDCIIKVGLASHFKDEIKKALDTIASSIKNDKSDAIKNRYVTALCFRLLRQHGYEVSQAKKSDFLDENGTFLKAKSMDVKGVLELFEASYLALESENILDDAKAFSTTILKDINSATTESNLYKQVVHALELPFHWRVRWFDVKWHIKTFQKDKSINKTLLDLAKVNFNVVQATLQNDLKEISRWWRNLGLIENLKFSRDRLVESFLCTVGLVFEPQYSSFRRWLTKVVIMILVIDDVYDIYGSLEELQHFTNAINRWDTAELEQLPEYMKICFKTLHTITGETAHEMQREKRWDQEQTETHLKKVWADFCRALFVEAKWFNKGYTPSVQEYLKTACISSSGSLLSVHSFFLIMNEGTREMLHFLEKNQEMFYNISLIIRLCNDLGTSVAEQERGDAASSIVCHMREMEVLEEEARSYLKGIIGNYWKKVNEKCFTQSPEMQLFININVNMARVVHNLYQNRDGFGVQDHQNKKQILSLLVHPFKLD.

Residues aspartate 313, aspartate 317, threonine 464, and glutamate 468 each coordinate Mg(2+). The short motif at 313 to 317 (DDVYD) is the DDXXD motif element.

The protein belongs to the terpene synthase family. Mg(2+) is required as a cofactor.

The enzyme catalyses (2E,6E)-farnesyl diphosphate = (3E,6E)-alpha-farnesene + diphosphate. Functionally, catalyzes the cyclization of farnesyl diphosphate to (E,E)-alpha-farnesene. This Ricinus communis (Castor bean) protein is Alpha-farnesene synthase (TPS7).